A 187-amino-acid chain; its full sequence is MLAPGESVLIPAEEISLSAGDVISLSVHNLIASVSSYRPWWSEFLAFGSIDRPSSFSPAVSRVKLNLHHFAVNYVLLTAASITLFLIGDPMALVTVASFVAMWLLLYFYRDHPLVLYGRHISDRVIVFGLILGSLWALWFINSLQCLILGVVTSVLLCLVHAIIRNSDDLFVQEKDVVVPSNFLHWS.

Helical transmembrane passes span leucine 84–leucine 104, valine 125–glutamine 145, and cysteine 146–asparagine 166.

Belongs to the PRA1 family. In terms of tissue distribution, expressed in roots and lateral roots.

The protein localises to the endosome membrane. In terms of biological role, may be involved in both secretory and endocytic intracellular trafficking in the endosomal/prevacuolar compartments. This chain is PRA1 family protein G1 (PRA1G1), found in Arabidopsis thaliana (Mouse-ear cress).